Reading from the N-terminus, the 536-residue chain is Alpha-1,3-mannosyl-glycoprotein 4-beta-N-acetylglucosaminyltransferase A (536 aa).

Residues 1–6 are Cytoplasmic-facing; sequence MRLRNG. The chain crosses the membrane as a helical; Signal-anchor for type II membrane protein span at residues 7-27; the sequence is TVATALVFITTFLSLSWYTAW. Positions 28-54 form a coiled coil; the sequence is QNGKEKLMAYQREFHALKERLRIAEHR. Over 28–536 the chain is Lumenal; the sequence is QNGKEKLMAY…EIHIKRNPAD (509 aa). N-linked (GlcNAc...) asparagine glycosylation is found at N77 and N458.

This sequence belongs to the glycosyltransferase 54 family. Requires a divalent metal cation as cofactor. N-glycosylated.

It is found in the golgi apparatus membrane. It localises to the secreted. The catalysed reaction is N(4)-{beta-D-GlcNAc-(1-&gt;2)-alpha-D-Man-(1-&gt;3)-[beta-D-GlcNAc-(1-&gt;2)-alpha-D-Man-(1-&gt;6)]-beta-D-Man-(1-&gt;4)-beta-D-GlcNAc-(1-&gt;4)-beta-D-GlcNAc}-L-asparaginyl-[protein] + UDP-N-acetyl-alpha-D-glucosamine = N(4)-{beta-D-GlcNAc-(1-&gt;2)-[beta-D-GlcNAc-(1-&gt;4)]-alpha-D-Man-(1-&gt;3)-[beta-D-GlcNAc-(1-&gt;2)-alpha-D-Man-(1-&gt;6)]-beta-D-Man-(1-&gt;4)-beta-D-GlcNAc-(1-&gt;4)-beta-D-GlcNAc}-L-asparaginyl-[protein] + UDP + H(+). The enzyme catalyses an N(4)-{beta-D-GlcNAc-(1-&gt;2)-alpha-D-Man-(1-&gt;3)-[alpha-D-Man-(1-&gt;6)]-beta-D-Man-(1-&gt;4)-beta-D-GlcNAc-(1-&gt;4)-beta-D-GlcNAc}-L-asparaginyl-[protein] + UDP-N-acetyl-alpha-D-glucosamine = an N(4)-{beta-D-GlcNAc-(1-&gt;2)-[beta-D-GlcNAc-(1-&gt;4)]-alpha-D-Man-(1-&gt;3)-[alpha-D-Man-(1-&gt;6)]-beta-D-Man-(1-&gt;4)-beta-D-GlcNAc-(1-&gt;4)-beta-D-GlcNAc}-L-asparaginyl-[protein] + UDP + H(+). It catalyses the reaction an N(4)-{beta-D-GlcNAc-(1-&gt;2)-alpha-D-Man-(1-&gt;3)-[beta-D-GlcNAc-(1-&gt;2)-[beta-D-GlcNAc-(1-&gt;6)]-alpha-D-Man-(1-&gt;6)]-beta-D-Man-(1-&gt;4)-beta-D-GlcNAc-(1-&gt;4)-beta-D-GlcNAc}-L-asparaginyl-[protein] + UDP-N-acetyl-alpha-D-glucosamine = an N(4)-{beta-D-GlcNAc-(1-&gt;2)-[beta-D-GlcNAc-(1-&gt;4)]-alpha-D-Man-(1-&gt;3)-[beta-D-GlcNAc-(1-&gt;2)-[beta-D-GlcNAc-(1-&gt;6)]-alpha-D-Man-(1-&gt;6)]-beta-D-Man-(1-&gt;4)-beta-D-GlcNAc-(1-&gt;4)-beta-D-GlcNAc}-L-asparaginyl-[protein] + UDP + H(+). It carries out the reaction an N(4)-{beta-D-GlcNAc-(1-&gt;2)-alpha-D-Man-(1-&gt;3)-[beta-D-GlcNAc-(1-&gt;2)-alpha-D-Man-(1-&gt;6)]-beta-D-Man-(1-&gt;4)-beta-D-GlcNAc-(1-&gt;4)-[alpha-L-Fuc-(1-&gt;6)]-beta-D-GlcNAc}-L-asparaginyl-[protein] + UDP-N-acetyl-alpha-D-glucosamine = N(4)-{beta-D-GlcNAc-(1-&gt;2)-[beta-D-GlcNAc-(1-&gt;4)]-alpha-D-Man-(1-&gt;3)-[beta-D-GlcNAc-(1-&gt;2)-alpha-D-Man-(1-&gt;6)]-beta-D-Man-(1-&gt;4)-beta-D-GlcNAc-(1-&gt;4)-[alpha-L-Fuc-(1-&gt;6)]-beta-D-GlcNAc}-asparaginyl-[protein] + UDP + H(+). The catalysed reaction is an N(4)-{beta-D-GlcNAc-(1-&gt;2)-alpha-D-Man-(1-&gt;3)-[beta-D-Gal-(1-&gt;4)-beta-D-GlcNAc-(1-&gt;2)-alpha-D-Man-(1-&gt;6)]-beta-D-Man-(1-&gt;4)-beta-D-GlcNAc-(1-&gt;4)-beta-D-GlcNAc}-L-asparaginyl-[protein] + UDP-N-acetyl-alpha-D-glucosamine = an N(4)-{beta-D-GlcNAc-(1-&gt;2)-[beta-D-GlcNAc-(1-&gt;4)]-alpha-D-Man-(1-&gt;3)-[beta-D-Gal-(1-&gt;4)-beta-D-GlcNAc-(1-&gt;2)-alpha-D-Man-(1-&gt;6)]-beta-D-Man-(1-&gt;4)-beta-D-GlcNAc-(1-&gt;4)-beta-D-GlcNAc}-L-asparaginyl-[protein] + UDP + H(+). The enzyme catalyses N(4)-{beta-D-GlcNAc-(1-&gt;2)-alpha-D-Man-(1-&gt;3)-[alpha-D-Man-(1-&gt;3)-{alpha-D-Man-(1-&gt;6)}-alpha-D-Man-(1-&gt;6)]-beta-D-Man-(1-&gt;4)-beta-D-GlcNAc-(1-&gt;4)-beta-D-GlcNAc}-asparaginyl-[protein] + UDP-N-acetyl-alpha-D-glucosamine = N(4)-{beta-D-GlcNAc-(1-&gt;2)-[beta-D-GlcNAc-(1-&gt;4)]-alpha-D-Man-(1-&gt;3)-[alpha-D-Man-(1-&gt;3)-{alpha-D-Man-(1-&gt;6)}-alpha-D-Man-(1-&gt;6)]-beta-D-Man-(1-&gt;4)-beta-D-GlcNAc-(1-&gt;4)-beta-D-GlcNAc}-asparaginyl-[protein] + UDP + H(+). It catalyses the reaction N(4)-{beta-D-GlcNAc-(1-&gt;2)-alpha-D-Man-(1-&gt;3)-beta-D-Man-(1-&gt;4)-beta-D-GlcNAc-(1-&gt;4)-beta-D-GlcNAc}-asparaginyl-[protein] + UDP-N-acetyl-alpha-D-glucosamine = N(4)-{beta-D-GlcNAc-(1-&gt;2)-[beta-D-GlcNAc-(1-&gt;4)]-alpha-D-Man-(1-&gt;3)-beta-D-Man-(1-&gt;4)-beta-D-GlcNAc-(1-&gt;4)-beta-D-GlcNAc}-asparaginyl-[protein] + UDP + H(+). Its pathway is protein modification; protein glycosylation. Its activity is regulated as follows. Inhibited by UDP. Its function is as follows. Glycosyltransferase that catalyze the transfer of GlcNAc from UDP-GlcNAc to the GlcNAcbeta1-2Manalpha1-3 arm of the core structure of N-linked glycans through a beta1-4 linkage and participates in the production of tri- and tetra-antennary N-linked sugar chains. Involved in glucose transport by mediating SLC2A2/GLUT2 glycosylation, thereby controlling cell-surface expression of SLC2A2 in pancreatic beta cells. The chain is Alpha-1,3-mannosyl-glycoprotein 4-beta-N-acetylglucosaminyltransferase A from Xenopus tropicalis (Western clawed frog).